The following is a 280-amino-acid chain: Acyl-[acyl-carrier-protein]--UDP-N-acetylglucosamine O-acyltransferase (280 aa).

This sequence belongs to the transferase hexapeptide repeat family. LpxA subfamily. As to quaternary structure, homotrimer.

It is found in the cytoplasm. The catalysed reaction is a (3R)-hydroxyacyl-[ACP] + UDP-N-acetyl-alpha-D-glucosamine = a UDP-3-O-[(3R)-3-hydroxyacyl]-N-acetyl-alpha-D-glucosamine + holo-[ACP]. It functions in the pathway glycolipid biosynthesis; lipid IV(A) biosynthesis; lipid IV(A) from (3R)-3-hydroxytetradecanoyl-[acyl-carrier-protein] and UDP-N-acetyl-alpha-D-glucosamine: step 1/6. Functionally, involved in the biosynthesis of lipid A, a phosphorylated glycolipid that anchors the lipopolysaccharide to the outer membrane of the cell. The sequence is that of Acyl-[acyl-carrier-protein]--UDP-N-acetylglucosamine O-acyltransferase from Chlamydia trachomatis serovar A (strain ATCC VR-571B / DSM 19440 / HAR-13).